Here is a 131-residue protein sequence, read N- to C-terminus: Cyclin-dependent kinase 4 inhibitor B (131 aa).

4 ANK repeats span residues 6-35 (GGDA…DPNR), 39-67 (FGRR…DPNC), 72-101 (TLTR…RLDV), and 105-131 (WGRL…TAGD).

Belongs to the CDKN2 cyclin-dependent kinase inhibitor family. In terms of assembly, heterodimer of CDKN2B with CDK4 or CDK6.

In terms of biological role, interacts strongly with CDK4 and CDK6. Potent inhibitor. Potential effector of TGF-beta induced cell cycle arrest. This chain is Cyclin-dependent kinase 4 inhibitor B (CDKN2B), found in Bos taurus (Bovine).